The sequence spans 587 residues: Putative ankyrin repeat protein L66 (587 aa).

16 ANK repeats span residues 77–106 (DKNLSMLLATKYGKLNIIKYLVRNGTDIRI), 108–136 (NNYPVRKASKYGYLDIVKYLIREDCDVSD), 137–166 (YDNYALRKATKNGYFEIVKLLVDQGADVHC), 168–196 (DNAPIKLACKYGYSKMVKFFHKKFLDVNY), 199–228 (NEDLLLKLASSGGHYKIVKYLVTKSNNIHF), 230–256 (DSLISVIKKGHLDILKYFISKGVILGN), 259–288 (NIRNATLMACKKGHYNVVEYLIDNIISIEN), 302–331 (FKKNLITNTCISGNLDMLKYLISKGINVAF), 333–360 (DNLPIKISACHDHLHLVKYLVSISNVKI), 361–390 (NYENILISASENGCIKVVKYLVDKGVNVKD), 392–418 (TAIYSAGINGYLQIVKFLESNGADLIK), 420–448 (HNEIFLECSSNGYLNVIKYIVSKYNINKS), 449–478 (IYDKALIIASKNNQLKTVKYLVHMGADIKS), 480–507 (KFHDMEKIIDNDLELLKYLVSKGLKINN), 509–537 (YKNLISKIIMNNDLDKLKYLISLGVNMKC), and 539–567 (RIDTFNSCIQNRNKEMLSYLISRKIKLIC).

The protein is Putative ankyrin repeat protein L66 of Acanthamoeba polyphaga mimivirus (APMV).